The following is a 333-amino-acid chain: Heat shock transcription factor, X-linked member 4 (333 aa).

The interval 1–66 is disordered; it reads MASQNTEQEY…QDNSPPEDRN (66 aa). Residues 29–39 show a composition bias toward low complexity; it reads GSSPDPNPDSS. The segment covering 49–60 has biased composition (polar residues); sequence AMSQDPGSQDNS. The DNA-binding element occupies 79-182; sequence FRLSFPRKLW…PRLLENIQRK (104 aa). Positions 227 to 275 are disordered; that stretch reads QGAPSVQGPSGTQSFRRSGMWSKKSATRHPLGNGPPQEPNGPSWEGTSG. Residues 228-242 are compositionally biased toward polar residues; that stretch reads GAPSVQGPSGTQSFR.

This sequence belongs to the HSF family.

The protein localises to the nucleus. The chain is Heat shock transcription factor, X-linked member 4 from Homo sapiens (Human).